Consider the following 175-residue polypeptide: Large ribosomal subunit protein uL30 (175 aa).

Belongs to the universal ribosomal protein uL30 family. Part of the 50S ribosomal subunit.

The protein is Large ribosomal subunit protein uL30 of Pyrobaculum neutrophilum (strain DSM 2338 / JCM 9278 / NBRC 100436 / V24Sta) (Thermoproteus neutrophilus).